We begin with the raw amino-acid sequence, 430 residues long: Sphingosine-1-phosphate phosphatase 1 (430 aa).

The disordered stretch occupies residues 34-103 (SSPAADEDAE…AGSQRRNSLT (70 aa)). Position 101 is a phosphoserine (Ser101). Thr103 carries the phosphothreonine modification. The next 4 membrane-spanning stretches (helical) occupy residues 121 to 141 (FCLG…PFWI), 152 to 172 (LVII…IIRW), 193 to 213 (MPST…LLTY), and 216 to 236 (WQYP…LVCL). Positions 167–175 (KDIIRWPRP) are phosphatase sequence motif I. The tract at residues 194-197 (PSTH) is phosphatase sequence motif II. His197 functions as the Proton donor in the catalytic mechanism. A phosphatase sequence motif III region spans residues 237-248 (SRIYMGMHSILD). Catalysis depends on His244, which acts as the Nucleophile. The next 5 helical transmembrane spans lie at 246-266 (ILDV…FYPL), 279-299 (YAPL…FTLD), 311-331 (ILGS…LGLS), 348-368 (VTLF…VLFV), and 409-429 (YGMV…FIGI).

This sequence belongs to the type 2 lipid phosphate phosphatase family. In terms of tissue distribution, highly expressed in liver and kidney. Expressed in epidermis, in the stratum granulosum and the stratum spinosum.

It localises to the endoplasmic reticulum membrane. The protein localises to the cell membrane. The enzyme catalyses sphinganine 1-phosphate + H2O = sphinganine + phosphate. It carries out the reaction sphing-4-enine 1-phosphate + H2O = sphing-4-enine + phosphate. Its activity is regulated as follows. Inhibited by NaF, sodium orthovanadate, propanolol, and N-ethylmaleimide. Its function is as follows. Specifically dephosphorylates sphingosine 1-phosphate (S1P), dihydro-S1P, and phyto-S1P. Does not act on ceramide 1-phosphate, lysophosphatidic acid or phosphatidic acid. Sphingosine-1-phosphate phosphatase activity is needed for efficient recycling of sphingosine into the sphingolipid synthesis pathway. Regulates the intracellular levels of the bioactive sphingolipid metabolite S1P that regulates diverse biological processes acting both as an extracellular receptor ligand or as an intracellular second messenger. Involved in efficient ceramide synthesis from exogenous sphingoid bases. Converts S1P to sphingosine, which is readily metabolized to ceramide via ceramide synthase. In concert with sphingosine kinase 2 (SphK2), recycles sphingosine into ceramide through a phosphorylation/dephosphorylation cycle. Regulates endoplasmic-to-Golgi trafficking of ceramides, resulting in the regulation of ceramide levels in the endoplasmic reticulum, preferentially long-chain ceramide species, and influences the anterograde membrane transport of both ceramide and proteins from the endoplasmic reticulum to the Golgi apparatus. The modulation of intracellular ceramide levels in turn regulates apoptosis. Via S1P levels, modulates resting tone, intracellular Ca(2+) and myogenic vasoconstriction in resistance arteries. Also involved in unfolded protein response (UPR) and ER stress-induced autophagy via regulation of intracellular S1P levels. Involved in the regulation of epidermal homeostasis and keratinocyte differentiation. This chain is Sphingosine-1-phosphate phosphatase 1, found in Mus musculus (Mouse).